The following is a 149-amino-acid chain: Calmodulin-5/6/7/8 (149 aa).

Ala-2 bears the N-acetylalanine mark. EF-hand domains are found at residues 8-43 (DQIS…LGQN), 44-79 (PTEA…KMKD), 81-116 (DSEE…LGEK), and 117-149 (LTDE…MMAK). Positions 21, 23, 25, 27, 32, 57, 59, 61, 63, 68, 94, 96, 98, and 105 each coordinate Ca(2+). Lys-116 is subject to N6,N6,N6-trimethyllysine. The Ca(2+) site is built by Asp-130, Asp-132, Asp-134, Gln-136, and Glu-141.

The protein belongs to the calmodulin family. As to expression, high expression of PCM5 and 8 in stolon tips and stems, moderate in roots, and low in leaves. Steady-state expression of PCM6 in all the tissues tested, except in the leaves where the expression is lower.

In terms of biological role, calmodulin mediates the control of a large number of enzymes, ion channels and other proteins by Ca(2+). Among the enzymes to be stimulated by the calmodulin-Ca(2+) complex are a number of protein kinases and phosphatases. This is Calmodulin-5/6/7/8 (PCM5) from Solanum tuberosum (Potato).